The chain runs to 73 residues: Large ribosomal subunit protein bL31 (73 aa).

Positions 16, 18, 38, and 41 each coordinate Zn(2+).

Belongs to the bacterial ribosomal protein bL31 family. Type A subfamily. As to quaternary structure, part of the 50S ribosomal subunit. It depends on Zn(2+) as a cofactor.

In terms of biological role, binds the 23S rRNA. This Vibrio parahaemolyticus serotype O3:K6 (strain RIMD 2210633) protein is Large ribosomal subunit protein bL31.